The following is a 242-amino-acid chain: Uridylate kinase (242 aa).

Lysine 8–glycine 11 provides a ligand contact to ATP. Position 50 (glycine 50) interacts with UMP. ATP-binding residues include glycine 51 and arginine 55. Residues aspartate 71 and threonine 132 to threonine 139 each bind UMP. Residues threonine 159, tyrosine 165, and aspartate 168 each contribute to the ATP site.

It belongs to the UMP kinase family. As to quaternary structure, homohexamer.

The protein resides in the cytoplasm. The catalysed reaction is UMP + ATP = UDP + ADP. It functions in the pathway pyrimidine metabolism; CTP biosynthesis via de novo pathway; UDP from UMP (UMPK route): step 1/1. Its activity is regulated as follows. Inhibited by UTP. Its function is as follows. Catalyzes the reversible phosphorylation of UMP to UDP. The chain is Uridylate kinase from Nitratiruptor sp. (strain SB155-2).